We begin with the raw amino-acid sequence, 394 residues long: Phosphoglycerate kinase (394 aa).

Substrate is bound by residues 21–23 (DFN), Arg-36, 59–62 (HLGR), Arg-118, and Arg-151. Ser-183 carries the post-translational modification Phosphoserine. Residues Lys-201 and Gly-292 each contribute to the ATP site. At Thr-299 the chain carries Phosphothreonine. ATP is bound by residues Glu-323 and 350–353 (GGDS).

Belongs to the phosphoglycerate kinase family. In terms of assembly, monomer.

It is found in the cytoplasm. The catalysed reaction is (2R)-3-phosphoglycerate + ATP = (2R)-3-phospho-glyceroyl phosphate + ADP. Its pathway is carbohydrate degradation; glycolysis; pyruvate from D-glyceraldehyde 3-phosphate: step 2/5. The sequence is that of Phosphoglycerate kinase from Bacillus cereus (strain ZK / E33L).